The following is a 241-amino-acid chain: 4-hydroxy-tetrahydrodipicolinate reductase (241 aa).

NAD(+) contacts are provided by residues 80 to 82 and 104 to 107; these read ATT and SANM. Residue His-136 is the Proton donor/acceptor of the active site. His-137 contacts (S)-2,3,4,5-tetrahydrodipicolinate. The active-site Proton donor is the Lys-140. 146–147 is a (S)-2,3,4,5-tetrahydrodipicolinate binding site; the sequence is GT.

This sequence belongs to the DapB family.

The protein localises to the cytoplasm. It catalyses the reaction (S)-2,3,4,5-tetrahydrodipicolinate + NAD(+) + H2O = (2S,4S)-4-hydroxy-2,3,4,5-tetrahydrodipicolinate + NADH + H(+). It carries out the reaction (S)-2,3,4,5-tetrahydrodipicolinate + NADP(+) + H2O = (2S,4S)-4-hydroxy-2,3,4,5-tetrahydrodipicolinate + NADPH + H(+). The protein operates within amino-acid biosynthesis; L-lysine biosynthesis via DAP pathway; (S)-tetrahydrodipicolinate from L-aspartate: step 4/4. Functionally, catalyzes the conversion of 4-hydroxy-tetrahydrodipicolinate (HTPA) to tetrahydrodipicolinate. The polypeptide is 4-hydroxy-tetrahydrodipicolinate reductase (Staphylococcus haemolyticus (strain JCSC1435)).